Here is a 335-residue protein sequence, read N- to C-terminus: Cytoplasmic tRNA 2-thiolation protein 1 (335 aa).

Belongs to the TtcA family. CTU1/NCS6/ATPBD3 subfamily. Interacts with ctu2.

The protein resides in the cytoplasm. Its pathway is tRNA modification; 5-methoxycarbonylmethyl-2-thiouridine-tRNA biosynthesis. Its function is as follows. Plays a central role in 2-thiolation of mcm(5)S(2)U at tRNA wobble positions of tRNA(Lys), tRNA(Glu) and tRNA(Gln). Directly binds tRNAs and probably acts by catalyzing adenylation of tRNAs, an intermediate required for 2-thiolation. It is unclear whether it acts as a sulfurtransferase that transfers sulfur from thiocarboxylated urm1 onto the uridine of tRNAs at wobble position. Prior mcm(5) tRNA modification by the elongator complex is required for 2-thiolation. May also be involved in protein urmylation. This is Cytoplasmic tRNA 2-thiolation protein 1 (ncs6) from Schizosaccharomyces pombe (strain 972 / ATCC 24843) (Fission yeast).